The chain runs to 61 residues: Small ribosomal subunit protein uS14 (61 aa).

Positions 24, 27, 40, and 43 each coordinate Zn(2+).

It belongs to the universal ribosomal protein uS14 family. Zinc-binding uS14 subfamily. Part of the 30S ribosomal subunit. Contacts proteins S3 and S10. Requires Zn(2+) as cofactor.

Its function is as follows. Binds 16S rRNA, required for the assembly of 30S particles and may also be responsible for determining the conformation of the 16S rRNA at the A site. The sequence is that of Small ribosomal subunit protein uS14 from Thermodesulfovibrio yellowstonii (strain ATCC 51303 / DSM 11347 / YP87).